Consider the following 509-residue polypeptide: 2,3-bisphosphoglycerate-independent phosphoglycerate mutase (509 aa).

D11 contacts Mn(2+). Residue Y35 is modified to Phosphotyrosine. A Mn(2+)-binding site is contributed by S61. Catalysis depends on S61, which acts as the Phosphoserine intermediate. Substrate-binding positions include H122, 152 to 153, R184, R190, 260 to 263, and K335; these read RD and RPDR. Residues D402, H406, D443, H444, and H461 each coordinate Mn(2+).

Belongs to the BPG-independent phosphoglycerate mutase family. As to quaternary structure, monomer. Requires Mn(2+) as cofactor.

It carries out the reaction (2R)-2-phosphoglycerate = (2R)-3-phosphoglycerate. The protein operates within carbohydrate degradation; glycolysis; pyruvate from D-glyceraldehyde 3-phosphate: step 3/5. Essential for rapid growth and for sporulation. Catalyzes the interconversion of 2-phosphoglycerate and 3-phosphoglycerate. The protein is 2,3-bisphosphoglycerate-independent phosphoglycerate mutase of Bacillus cereus (strain ATCC 10987 / NRS 248).